The primary structure comprises 258 residues: Ribosomal RNA small subunit methyltransferase J (258 aa).

S-adenosyl-L-methionine is bound by residues 106-107 (RD), 122-123 (ER), and aspartate 181.

It belongs to the methyltransferase superfamily. RsmJ family.

The protein localises to the cytoplasm. The catalysed reaction is guanosine(1516) in 16S rRNA + S-adenosyl-L-methionine = N(2)-methylguanosine(1516) in 16S rRNA + S-adenosyl-L-homocysteine + H(+). Its function is as follows. Specifically methylates the guanosine in position 1516 of 16S rRNA. In Pseudoalteromonas atlantica (strain T6c / ATCC BAA-1087), this protein is Ribosomal RNA small subunit methyltransferase J.